Reading from the N-terminus, the 218-residue chain is uncharacterized protein (218 aa).

5 helical membrane-spanning segments follow: residues 27–49, 57–77, 115–135, 142–162, and 180–200; these read IALENAGIPIPGETITLLGGFLA, GGVLIAAIAGAVLGDSCGYWV, VFFGRFVTLLRIFAGPMAGIV, FLLYNIGGASVWAAITVSLAY, and FSWFALAAVVGMVGIYFVFHF.

Belongs to the DedA family.

The protein localises to the cell membrane. This is an uncharacterized protein from Synechocystis sp. (strain ATCC 27184 / PCC 6803 / Kazusa).